The sequence spans 697 residues: Tryptophan synthase (697 aa).

Residues 1 to 298 (MTEQIKKTFL…AVVEPINEMY (298 aa)) are tryptophan synthase alpha chain. Catalysis depends on proton acceptor residues glutamate 50 and aspartate 61. Residues 298-697 (YLPQKYGMFG…GPKIGWDLRF (400 aa)) form a tryptophan synthase beta chain region. Lysine 381 carries the post-translational modification N6-(pyridoxal phosphate)lysine.

In the N-terminal section; belongs to the TrpA family. This sequence in the C-terminal section; belongs to the TrpB family. It depends on pyridoxal 5'-phosphate as a cofactor.

It catalyses the reaction (1S,2R)-1-C-(indol-3-yl)glycerol 3-phosphate + L-serine = D-glyceraldehyde 3-phosphate + L-tryptophan + H2O. The protein operates within amino-acid biosynthesis; L-tryptophan biosynthesis; L-tryptophan from chorismate: step 5/5. This Schizosaccharomyces pombe (strain 972 / ATCC 24843) (Fission yeast) protein is Tryptophan synthase (trp2).